The primary structure comprises 70 residues: Cecropin-P1 (70 aa).

A signal peptide spans 1 to 13 (MFLIYLFVQTAES). The propeptide at 45–70 (RRRFVAEQDAIHSRVSREVPTLSDSV) is removed in mature form.

As to expression, expressed in the body wall, intestine, uterus and ovary.

The protein resides in the secreted. Its function is as follows. Has antibacterial activity against several Gram-positive and Gram-negative bacteria. Is weakly active against yeasts. Acts by a nonpore mechanism. The chain is Cecropin-P1 (ASCEC-1) from Ascaris suum (Pig roundworm).